A 417-amino-acid polypeptide reads, in one-letter code: Metal-binding activator 1 (417 aa).

The segment at residues 1 to 40 (MIIFNGNKYACASCIRGHRSSTCRHSHRMLIKVRTRGRPS) is a DNA-binding region (copper-fist). The Zn(2+) site is built by Cys11, Cys14, Cys23, and His25. Disordered regions lie at residues 128–198 (FLRK…IFTP) and 216–242 (YNSSVPGAHDSSETLTPQSTTTIAAPH). At Ser143 the chain carries Phosphoserine. Residues 153-178 (SEKKERSRLQQEPIRHFSNCCKKDKS) show a composition bias toward basic and acidic residues. 2 stretches are compositionally biased toward polar residues: residues 179 to 190 (QNPASNGKTNKA) and 228 to 238 (ETLTPQSTTTI). 2 consecutive repeat copies span residues 264–279 (CSCEDESCPCVNCLIH) and 322–337 (CICPPDNCTCDGCFSH). Residues 264–337 (CSCEDESCPC…NCTCDGCFSH (74 aa)) form a 2 X 16 AA repeat of C-X-C-X(4)-C-X-C-X-X-C-X-X-H region.

It is found in the nucleus. In terms of biological role, regulatory protein involved in Cu/Fe utilization and stress resistance. Involved in basal level transcription of FRE1 and H(2)O(2)-induced transcription of CTT1. Regulates the transcription of CTR1 and CTR3 via the copper ion responsive elements in their promoters. Required for degradation of CTR1. This Saccharomyces cerevisiae (strain ATCC 204508 / S288c) (Baker's yeast) protein is Metal-binding activator 1 (MAC1).